A 97-amino-acid chain; its full sequence is Cornifin (97 aa).

A disordered region spans residues 1 to 42 (MSSQQQKQPCTPPPQPQQQQVKQPCQPPPQEPCVPKTKEPCH). Ser-2 bears the N-acetylserine mark. Tandem repeats lie at residues 3 to 14 (SQQQKQPCTPPP), 18 to 29 (QQQVKQPCQPPP), 31 to 38 (EPCVPKTK), 39 to 46 (EPCHPKVP), 47 to 54 (EPCQPKVP), 55 to 62 (EPCQPKVP), 63 to 70 (EPCHPKVP), 71 to 78 (EPCQPKVP), and 79 to 85 (EPCPSPV). Positions 3-29 (SQQQKQPCTPPPQPQQQQVKQPCQPPP) are 2 X 12 AA approximate repeats. The tract at residues 31–85 (EPCVPKTKEPCHPKVPEPCQPKVPEPCQPKVPEPCHPKVPEPCQPKVPEPCPSPV) is 7 X 8 AA approximate tandem repeats.

Belongs to the cornifin (SPRR) family. As to expression, not detected in normal lung tissue but seen in tumor tissues. Cells around the keratin pearls contain high levels.

The protein resides in the cytoplasm. Its function is as follows. Cross-linked envelope protein of keratinocytes. It is a keratinocyte protein that first appears in the cell cytosol, but ultimately becomes cross-linked to membrane proteins by transglutaminase. All that results in the formation of an insoluble envelope beneath the plasma membrane. This is Cornifin (SPRP) from Sus scrofa (Pig).